A 329-amino-acid chain; its full sequence is Quinone oxidoreductase (329 aa).

A2 bears the N-acetylalanine mark. K23 carries the N6-acetyllysine modification. NADP(+) contacts are provided by residues Y53, S158–V161, G181, H200, N229, V246–R249, and V269–L271. K296 is subject to N6-succinyllysine.

Belongs to the zinc-containing alcohol dehydrogenase family. Quinone oxidoreductase subfamily. In terms of assembly, homotetramer.

The protein resides in the cytoplasm. It carries out the reaction 2 a quinone + NADPH + H(+) = 2 a 1,4-benzosemiquinone + NADP(+). Its function is as follows. Does not have alcohol dehydrogenase activity. Binds NADP and acts through a one-electron transfer process. Orthoquinones, such as 1,2-naphthoquinone or 9,10-phenanthrenequinone, are the best substrates (in vitro). May act in the detoxification of xenobiotics. Interacts with (AU)-rich elements (ARE) in the 3'-UTR of target mRNA species and enhances their stability. NADPH binding interferes with mRNA binding. The sequence is that of Quinone oxidoreductase (Cryz) from Rattus norvegicus (Rat).